We begin with the raw amino-acid sequence, 128 residues long: Cytochrome c-type biogenesis protein CcmE (128 aa).

The Cytoplasmic segment spans residues 1–8 (MQKRVRNR). Residues 9–29 (LITIIICFCSACLGISIILYN) traverse the membrane as a helical; Signal-anchor for type II membrane protein segment. Topologically, residues 30–128 (LEKNIVFFLP…KHDENYRPPQ (99 aa)) are periplasmic. Positions 120 and 124 each coordinate heme.

This sequence belongs to the CcmE/CycJ family.

Its subcellular location is the cell inner membrane. Its function is as follows. Heme chaperone required for the biogenesis of c-type cytochromes. Transiently binds heme delivered by CcmC and transfers the heme to apo-cytochromes in a process facilitated by CcmF and CcmH. The protein is Cytochrome c-type biogenesis protein CcmE of Rickettsia peacockii (strain Rustic).